An 804-amino-acid polypeptide reads, in one-letter code: Probable phosphoketolase (804 aa).

It belongs to the XFP family. Requires thiamine diphosphate as cofactor.

The polypeptide is Probable phosphoketolase (Mycolicibacterium paratuberculosis (strain ATCC BAA-968 / K-10) (Mycobacterium paratuberculosis)).